A 118-amino-acid chain; its full sequence is Large ribosomal subunit protein bL20 (118 aa).

This sequence belongs to the bacterial ribosomal protein bL20 family.

Functionally, binds directly to 23S ribosomal RNA and is necessary for the in vitro assembly process of the 50S ribosomal subunit. It is not involved in the protein synthesizing functions of that subunit. This Francisella tularensis subsp. novicida (strain U112) protein is Large ribosomal subunit protein bL20.